The chain runs to 1036 residues: Phospholipase D1 (1036 aa).

Residues 81 to 212 (IKAQVLEVER…TEFLDVSQLS (132 aa)) form the PX domain. Residues 219-328 (PKGLEGMIMK…WGGAIEEFIQ (110 aa)) enclose the PH domain. Residues C240 and C241 are each lipidated (S-palmitoyl cysteine). In terms of domain architecture, PLD phosphodiesterase 1 spans 459 to 486 (YLWAHHEKLVIIDQSVAFVGGIDLAYGR). The segment at 463–890 (HHEKLVIIDQ…MLGKRDSEMA (428 aa)) is catalytic. S499, S561, and S591 each carry phosphoserine. A PLD phosphodiesterase 2 domain is found at 853–880 (ELIYVHSKLLIADDNTVIIGSANINDRS).

It belongs to the phospholipase D family. As to quaternary structure, interacts with PIP5K1B.

It localises to the cytoplasm. Its subcellular location is the perinuclear region. The protein resides in the endoplasmic reticulum membrane. The protein localises to the golgi apparatus membrane. It is found in the late endosome membrane. It catalyses the reaction a 1,2-diacyl-sn-glycero-3-phosphocholine + H2O = a 1,2-diacyl-sn-glycero-3-phosphate + choline + H(+). Stimulated by phosphatidylinositol 4,5-bisphosphate and phosphatidylinositol 3,4,5-trisphosphate, activated by the phosphokinase C-alpha, by the ADP-ribosylation factor-1 (ARF-1), and to a lesser extent by GTP-binding proteins: RHO A, RAC-1 and CDC42. In terms of biological role, implicated as a critical step in numerous cellular pathways, including signal transduction, membrane trafficking, and the regulation of mitosis. May be involved in the regulation of perinuclear intravesicular membrane traffic. The sequence is that of Phospholipase D1 (PLD1) from Cricetulus griseus (Chinese hamster).